The primary structure comprises 661 residues: DnaJ protein ERDJ2B (661 aa).

At 1-8 (MAESEENS) the chain is on the lumenal side. The helical transmembrane segment at 9 to 29 (VLFPIFILTMMAIPLVPYTFV) threads the bilayer. Residues 30–65 (KLSRAFSKKQRSIHCQCLECDRSGKYKRSISQSISS) are Cytoplasmic-facing. Residues 66-86 (FTSCSNLTVVLLWIVMIFLIY) traverse the membrane as a helical segment. Over 87–190 (HTKNMSRESQ…FILNMNGESG (104 aa)) the chain is Lumenal. N-linked (GlcNAc...) asparagine glycosylation occurs at N90. Positions 99–164 (EPFGILGLEP…LSRENFEKYG (66 aa)) constitute a J domain. A helical membrane pass occupies residues 191–211 (GILLLCTVGLCILLPLVIASI). In terms of domain architecture, SEC63 spans 206 to 597 (LVIASIYLWR…IGCDQKTSLK (392 aa)). Residues 212–661 (YLWRSSKYTG…SSEESGSDEE (450 aa)) lie on the Cytoplasmic side of the membrane. The disordered stretch occupies residues 608–661 (EGENAEEGLEEEDDEIEEEDYESEYSEDEEDKKRGSKKKVNKESSSEESGSDEE). Over residues 609–637 (GENAEEGLEEEDDEIEEEDYESEYSEDEE) the composition is skewed to acidic residues.

Interacts with OEP61/TPR7. As to expression, expressed in leaves, flower buds and flowers.

It localises to the endoplasmic reticulum membrane. In terms of biological role, required for integral membrane and secreted preprotein translocation across the endoplasmic reticulum membrane. The protein is DnaJ protein ERDJ2B (ERDJ2B) of Arabidopsis thaliana (Mouse-ear cress).